The chain runs to 87 residues: MKLLFVMMLLFFMFLWYYNVNFLSFLILMEFLVITVLFFIIGYEINSWLFLIFLVFSVCELVLGLSLLVSMNYELGHQKLSVMDLIY.

The next 2 membrane-spanning stretches (helical) occupy residues 22–42 and 49–69; these read FLSF…FIIG and LFLI…SLLV.

This sequence belongs to the complex I subunit 4L family.

It localises to the mitochondrion membrane. The enzyme catalyses a ubiquinone + NADH + 5 H(+)(in) = a ubiquinol + NAD(+) + 4 H(+)(out). Its function is as follows. Core subunit of the mitochondrial membrane respiratory chain NADH dehydrogenase (Complex I) that is believed to belong to the minimal assembly required for catalysis. Complex I functions in the transfer of electrons from NADH to the respiratory chain. The immediate electron acceptor for the enzyme is believed to be ubiquinone. In Apis mellifera ligustica (Common honeybee), this protein is NADH-ubiquinone oxidoreductase chain 4L (ND4L).